Here is a 471-residue protein sequence, read N- to C-terminus: UDP-N-acetylmuramate--L-alanine ligase (471 aa).

114–120 is a binding site for ATP; that stretch reads GTHGKTT.

This sequence belongs to the MurCDEF family.

It is found in the cytoplasm. The catalysed reaction is UDP-N-acetyl-alpha-D-muramate + L-alanine + ATP = UDP-N-acetyl-alpha-D-muramoyl-L-alanine + ADP + phosphate + H(+). It participates in cell wall biogenesis; peptidoglycan biosynthesis. In terms of biological role, cell wall formation. The polypeptide is UDP-N-acetylmuramate--L-alanine ligase (Agrobacterium fabrum (strain C58 / ATCC 33970) (Agrobacterium tumefaciens (strain C58))).